We begin with the raw amino-acid sequence, 260 residues long: Ribose-5-phosphate isomerase (260 aa).

It belongs to the ribose 5-phosphate isomerase family.

It localises to the cytoplasm. The enzyme catalyses aldehydo-D-ribose 5-phosphate = D-ribulose 5-phosphate. Its pathway is carbohydrate degradation; pentose phosphate pathway; D-ribose 5-phosphate from D-ribulose 5-phosphate (non-oxidative stage): step 1/1. This Candida glabrata (strain ATCC 2001 / BCRC 20586 / JCM 3761 / NBRC 0622 / NRRL Y-65 / CBS 138) (Yeast) protein is Ribose-5-phosphate isomerase (RKI1).